Consider the following 412-residue polypeptide: Peptidase T (412 aa).

His-84 is a binding site for Zn(2+). Asp-86 is an active-site residue. Asp-146 serves as a coordination point for Zn(2+). Glu-179 (proton acceptor) is an active-site residue. The Zn(2+) site is built by Glu-180, Asp-202, and His-385.

Belongs to the peptidase M20B family. Zn(2+) is required as a cofactor.

The protein resides in the cytoplasm. It carries out the reaction Release of the N-terminal residue from a tripeptide.. Its function is as follows. Cleaves the N-terminal amino acid of tripeptides. The sequence is that of Peptidase T from Haemophilus influenzae (strain ATCC 51907 / DSM 11121 / KW20 / Rd).